Here is a 262-residue protein sequence, read N- to C-terminus: Transmembrane protein 106A (262 aa).

The chain crosses the membrane as a helical span at residues 95–115 (FVFLAVLICLVTSSFIVFFLF).

Belongs to the TMEM106 family. In terms of tissue distribution, expressed in renal cells (at protein level). Expressed in epithelial cells.

The protein resides in the cell membrane. Functionally, activates macrophages and polarizes them into M1-like macrophages through the activation of the MAPK and NF-kappaB signaling pathway. Upon activation, up-regulates the expression of CD80, CD86, CD69 and MHC II on macrophages, and induces the release of pro-inflammatory cytokines such as TNF, IL1B, IL6, CCL2 and nitric oxide. May play a role in inhibition of proliferation and migration. The chain is Transmembrane protein 106A (TMEM106A) from Homo sapiens (Human).